The chain runs to 312 residues: L-lactate dehydrogenase (312 aa).

NAD(+) contacts are provided by residues valine 11, aspartate 32, arginine 37, and 76–77 (GA). Residues glutamine 79, arginine 85, and 117 to 120 (NPVD) each bind substrate. NAD(+)-binding positions include 115-117 (VSN) and threonine 140. A substrate-binding site is contributed by 145-148 (DTAR). Arginine 150 and histidine 165 together coordinate beta-D-fructose 1,6-bisphosphate. Residue histidine 172 is the Proton acceptor of the active site. Tyrosine 217 carries the phosphotyrosine modification. A substrate-binding site is contributed by threonine 226.

The protein belongs to the LDH/MDH superfamily. LDH family. Homotetramer.

The protein localises to the cytoplasm. It carries out the reaction (S)-lactate + NAD(+) = pyruvate + NADH + H(+). It participates in fermentation; pyruvate fermentation to lactate; (S)-lactate from pyruvate: step 1/1. With respect to regulation, allosterically activated by fructose 1,6-bisphosphate (FBP). Its function is as follows. Catalyzes the conversion of lactate to pyruvate. The protein is L-lactate dehydrogenase of Pseudothermotoga lettingae (strain ATCC BAA-301 / DSM 14385 / NBRC 107922 / TMO) (Thermotoga lettingae).